The primary structure comprises 294 residues: Phosphatidylglycerol--prolipoprotein diacylglyceryl transferase (294 aa).

Transmembrane regions (helical) follow at residues 10 to 30 (VALALGPIEIHWYGLMYLLAF), 55 to 75 (LVFYGALGVILGGRIGYVLFY), 91 to 111 (WEGGMSFHGGFIGVMLGMWFF), 119 to 139 (AFQVFDFIVPCVPTGLLFGRI), 196 to 216 (PSQLYEAFAEGLLLFIFLWWY), 224 to 244 (MAASAVFLLGYGISRFIIEFF), and 258 to 278 (WMTKGQLLSAPMIIAGLIMLI). Arginine 138 lines the a 1,2-diacyl-sn-glycero-3-phospho-(1'-sn-glycerol) pocket.

Belongs to the Lgt family.

The protein localises to the cell inner membrane. The catalysed reaction is L-cysteinyl-[prolipoprotein] + a 1,2-diacyl-sn-glycero-3-phospho-(1'-sn-glycerol) = an S-1,2-diacyl-sn-glyceryl-L-cysteinyl-[prolipoprotein] + sn-glycerol 1-phosphate + H(+). It functions in the pathway protein modification; lipoprotein biosynthesis (diacylglyceryl transfer). Catalyzes the transfer of the diacylglyceryl group from phosphatidylglycerol to the sulfhydryl group of the N-terminal cysteine of a prolipoprotein, the first step in the formation of mature lipoproteins. The sequence is that of Phosphatidylglycerol--prolipoprotein diacylglyceryl transferase from Psychrobacter arcticus (strain DSM 17307 / VKM B-2377 / 273-4).